Consider the following 351-residue polypeptide: MAAAPLKVCIVGSGNWGSAVAKIIGNNVKKLQKFASTVKMWVFEETVNGRKLTDIINNDHENVKYLPGHKLPENVVAMSNLSEAVQDADLLVFVIPHQFIHRICDEITGRVPKKALGITLIKGIDEGPEGLKLISDIIREKMGIDISVLMGANIANEVAAEKFCETTIGSKVMENGLLFKELLQTPNFRITVVDDADTVELCGALKNIVAVGAGFCDGLRCGDNTKAAVIRLGLMEMIAFARIFCKGQVSTATFLESCGVADLITTCYGGRNRRVAEAFARTGKTIEELEKEMLNGQKLQGPQTSAEVYRILKQKGLLDKFPLFTAVYQICYESRPVQEMLSCLQSHPEHT.

12-17 (GSGNWG) provides a ligand contact to NAD(+). Position 122 (K122) interacts with substrate. A155 provides a ligand contact to NAD(+). The active-site Proton acceptor is K206. Residues R271, K298, and Q300 each contribute to the NAD(+) site. 271–272 (RN) contributes to the substrate binding site.

It belongs to the NAD-dependent glycerol-3-phosphate dehydrogenase family. In terms of assembly, interacts with SCN5A. Most highly expressed in heart tissue, with lower levels in the skeletal muscle, kidney, lung and other organs.

The protein resides in the cytoplasm. It catalyses the reaction sn-glycerol 3-phosphate + NAD(+) = dihydroxyacetone phosphate + NADH + H(+). Its function is as follows. Plays a role in regulating cardiac sodium current; decreased enzymatic activity with resulting increased levels of glycerol 3-phosphate activating the DPD1L-dependent SCN5A phosphorylation pathway, may ultimately lead to decreased sodium current; cardiac sodium current may also be reduced due to alterations of NAD(H) balance induced by DPD1L. This is Glycerol-3-phosphate dehydrogenase 1-like protein from Homo sapiens (Human).